Consider the following 212-residue polypeptide: Probable GTP-binding protein EngB (212 aa).

Positions 38 to 210 constitute an EngB-type G domain; the sequence is SLPEIAFVGK…KASLAKCIKP (173 aa). Residues 46–53, 73–77, 91–94, 158–161, and 189–191 each bind GTP; these read GKSNVGKS, GRTRQ, DLPG, TKSD, and VSN. Mg(2+) is bound by residues Ser53 and Thr75.

The protein belongs to the TRAFAC class TrmE-Era-EngA-EngB-Septin-like GTPase superfamily. EngB GTPase family. The cofactor is Mg(2+).

Its function is as follows. Necessary for normal cell division and for the maintenance of normal septation. This chain is Probable GTP-binding protein EngB, found in Rickettsia conorii (strain ATCC VR-613 / Malish 7).